Consider the following 182-residue polypeptide: Early nodulin-like protein 10 (182 aa).

A signal peptide spans 1-20 (MSSVMMCCCLLLLFGLLSEG). The 105-residue stretch at 21 to 125 (REILVGGKSN…GEKLRVVVLS (105 aa)) folds into the Phytocyanin domain. Residue Asn65 is glycosylated (N-linked (GlcNAc...) asparagine). The cysteines at positions 79 and 113 are disulfide-linked. 2 N-linked (GlcNAc...) asparagine glycosylation sites follow: Asn129 and Asn148. Asn157 is lipidated: GPI-anchor amidated asparagine. The propeptide at 158 to 182 (AHIMNKGSLNTAWSLLLLLPLGLLV) is removed in mature form.

The protein belongs to the early nodulin-like (ENODL) family. As to expression, mostly expressed in flowers, and, to a lower extent, in leaves, but barely in seedlings, stems, seeds and roots.

The protein resides in the cell membrane. In terms of biological role, may act as a carbohydrate transporter. The sequence is that of Early nodulin-like protein 10 from Arabidopsis thaliana (Mouse-ear cress).